The following is a 297-amino-acid chain: 4-hydroxy-tetrahydrodipicolinate synthase (297 aa).

Pyruvate is bound at residue threonine 47. Tyrosine 136 functions as the Proton donor/acceptor in the catalytic mechanism. The Schiff-base intermediate with substrate role is filled by lysine 165. Isoleucine 206 is a binding site for pyruvate.

It belongs to the DapA family. Homotetramer; dimer of dimers.

The protein resides in the cytoplasm. The catalysed reaction is L-aspartate 4-semialdehyde + pyruvate = (2S,4S)-4-hydroxy-2,3,4,5-tetrahydrodipicolinate + H2O + H(+). It participates in amino-acid biosynthesis; L-lysine biosynthesis via DAP pathway; (S)-tetrahydrodipicolinate from L-aspartate: step 3/4. Its function is as follows. Catalyzes the condensation of (S)-aspartate-beta-semialdehyde [(S)-ASA] and pyruvate to 4-hydroxy-tetrahydrodipicolinate (HTPA). In Campylobacter fetus subsp. fetus (strain 82-40), this protein is 4-hydroxy-tetrahydrodipicolinate synthase.